An 878-amino-acid chain; its full sequence is Alanine--tRNA ligase (878 aa).

Zn(2+) is bound by residues His-567, His-571, Cys-668, and His-672.

It belongs to the class-II aminoacyl-tRNA synthetase family. It depends on Zn(2+) as a cofactor.

It is found in the cytoplasm. It catalyses the reaction tRNA(Ala) + L-alanine + ATP = L-alanyl-tRNA(Ala) + AMP + diphosphate. Its function is as follows. Catalyzes the attachment of alanine to tRNA(Ala) in a two-step reaction: alanine is first activated by ATP to form Ala-AMP and then transferred to the acceptor end of tRNA(Ala). Also edits incorrectly charged Ser-tRNA(Ala) and Gly-tRNA(Ala) via its editing domain. The protein is Alanine--tRNA ligase of Magnetococcus marinus (strain ATCC BAA-1437 / JCM 17883 / MC-1).